We begin with the raw amino-acid sequence, 73 residues long: Translation initiation factor IF-1 (73 aa).

Residues 1-73 form the S1-like domain; it reads MAKKDGVIEI…TRGRIVYRYK (73 aa).

This sequence belongs to the IF-1 family. As to quaternary structure, component of the 30S ribosomal translation pre-initiation complex which assembles on the 30S ribosome in the order IF-2 and IF-3, IF-1 and N-formylmethionyl-tRNA(fMet); mRNA recruitment can occur at any time during PIC assembly.

It is found in the cytoplasm. Its function is as follows. One of the essential components for the initiation of protein synthesis. Stabilizes the binding of IF-2 and IF-3 on the 30S subunit to which N-formylmethionyl-tRNA(fMet) subsequently binds. Helps modulate mRNA selection, yielding the 30S pre-initiation complex (PIC). Upon addition of the 50S ribosomal subunit IF-1, IF-2 and IF-3 are released leaving the mature 70S translation initiation complex. This chain is Translation initiation factor IF-1, found in Paenarthrobacter aurescens (strain TC1).